Here is a 273-residue protein sequence, read N- to C-terminus: Glutamate 5-kinase (273 aa).

Position 15 (Lys15) interacts with ATP. 3 residues coordinate substrate: Ser55, Asp142, and Asn158. ATP contacts are provided by residues 178 to 179 (SD) and 220 to 226 (TGGMLSK).

This sequence belongs to the glutamate 5-kinase family.

It is found in the cytoplasm. It catalyses the reaction L-glutamate + ATP = L-glutamyl 5-phosphate + ADP. It participates in amino-acid biosynthesis; L-proline biosynthesis; L-glutamate 5-semialdehyde from L-glutamate: step 1/2. Functionally, catalyzes the transfer of a phosphate group to glutamate to form L-glutamate 5-phosphate. The chain is Glutamate 5-kinase from Streptococcus pyogenes serotype M49 (strain NZ131).